The sequence spans 369 residues: tRNA-specific 2-thiouridylase MnmA (369 aa).

ATP contacts are provided by residues 10 to 17 (GLSGGVDS) and Leu36. The active-site Nucleophile is Cys97. The cysteines at positions 97 and 196 are disulfide-linked. Residue Gly122 participates in ATP binding. Residues 146 to 148 (KDQ) are interaction with tRNA. Catalysis depends on Cys196, which acts as the Cysteine persulfide intermediate. An interaction with tRNA region spans residues 301 to 302 (RY).

It belongs to the MnmA/TRMU family.

It localises to the cytoplasm. The catalysed reaction is S-sulfanyl-L-cysteinyl-[protein] + uridine(34) in tRNA + AH2 + ATP = 2-thiouridine(34) in tRNA + L-cysteinyl-[protein] + A + AMP + diphosphate + H(+). Functionally, catalyzes the 2-thiolation of uridine at the wobble position (U34) of tRNA, leading to the formation of s(2)U34. The sequence is that of tRNA-specific 2-thiouridylase MnmA from Thermosynechococcus vestitus (strain NIES-2133 / IAM M-273 / BP-1).